Reading from the N-terminus, the 441-residue chain is Peroxisomal biogenesis factor 3 (441 aa).

The Peroxisomal portion of the chain corresponds to 1–17; the sequence is MAPNQRSRSLLQRHRGK. Residues 18 to 39 form a helical membrane-spanning segment; it reads VLISLTGIAALFTTGSVVVFFV. Topologically, residues 40-441 are cytoplasmic; that stretch reads KRWLYKQQLR…GVSSSFSFKP (402 aa).

The protein belongs to the peroxin-3 family. As to quaternary structure, interacts with MSP1; leading to inhibit the translocase activity of MSP1.

It is found in the peroxisome membrane. Functionally, involved in peroxisome biosynthesis. Acts as a regulator of MSP1 by inhibiting the ability of MSP1 to unfold target proteins. The chain is Peroxisomal biogenesis factor 3 (PEX3) from Saccharomyces cerevisiae (strain ATCC 204508 / S288c) (Baker's yeast).